Consider the following 853-residue polypeptide: Leucine--tRNA ligase (853 aa).

The short motif at 40 to 50 is the 'HIGH' region element; sequence PYPSGKMHMGH. A 'KMSKS' region motif is present at residues 609–613; sequence KMSKS. Lysine 612 is a binding site for ATP.

Belongs to the class-I aminoacyl-tRNA synthetase family.

Its subcellular location is the cytoplasm. It catalyses the reaction tRNA(Leu) + L-leucine + ATP = L-leucyl-tRNA(Leu) + AMP + diphosphate. The sequence is that of Leucine--tRNA ligase from Brachyspira hyodysenteriae (strain ATCC 49526 / WA1).